We begin with the raw amino-acid sequence, 303 residues long: 2-dehydropantoate 2-reductase (303 aa).

Residues 7–12 (GCGALG), asparagine 98, and alanine 122 each bind NADP(+). Asparagine 98 lines the substrate pocket. Residue lysine 176 is the Proton donor of the active site. Residues asparagine 180, asparagine 184, asparagine 194, and serine 244 each coordinate substrate. Residue glutamate 256 coordinates NADP(+).

This sequence belongs to the ketopantoate reductase family. In terms of assembly, monomer.

The protein localises to the cytoplasm. It carries out the reaction (R)-pantoate + NADP(+) = 2-dehydropantoate + NADPH + H(+). It participates in cofactor biosynthesis; (R)-pantothenate biosynthesis; (R)-pantoate from 3-methyl-2-oxobutanoate: step 2/2. Its function is as follows. Catalyzes the NADPH-dependent reduction of ketopantoate into pantoic acid. Has a strong preference for NADPH over NADH as the electron acceptor. Pantoate, ketoisovalerate, oxaloacetate, pyruvate, 3-hydroxypyruvate, alpha-ketoglutarate, alpha-ketobutyrate, and acetaldehyde cannot serve as substrates for reduction. This is 2-dehydropantoate 2-reductase from Salmonella typhimurium (strain LT2 / SGSC1412 / ATCC 700720).